The chain runs to 345 residues: Ubiquitin-associated domain-containing protein 2 (345 aa).

A signal peptide spans 1–35; that stretch reads MFTSTGSSGLYKAPLSKSLLLVPSALSLLLALLLP. Residues 36-91 lie on the Extracellular side of the membrane; it reads HCQKLFVYDLHAVKNDFQIWRLICGRIICLDLKDTFCSSLLIYNFRIFERRYGSRK. Residues 92–112 traverse the membrane as a helical segment; the sequence is FASFLLGSWVLSALFDFLLVE. The Cytoplasmic portion of the chain corresponds to 113–125; it reads AMQYFFGITAASN. A helical transmembrane segment spans residues 126-146; it reads LPSGFLAPVFALFVPFYCSIP. Over 147-163 the chain is Extracellular; sequence RVQVAQILGPLSITNKT. The N-linked (GlcNAc...) asparagine glycan is linked to asparagine 161. The chain crosses the membrane as a helical span at residues 164-184; it reads LIYILGLQLFTSGSYIWIVAI. Topologically, residues 185-345 are cytoplasmic; sequence SGLMSGLCYN…NVATNFLLQH (161 aa). The region spanning 305–345 is the UBA domain; it reads EVSEEQVARLMEMGFSRGDALEALRASNNDLNVATNFLLQH.

As to quaternary structure, interacts with LMBR1L, FAF2, AMFR and VCP.

It is found in the endoplasmic reticulum membrane. Its function is as follows. Restricts trafficking of FAF2 from the endoplasmic reticulum to lipid droplets. In association with LMBR1L and E3 ubiquitin-protein ligase AMFR, negatively regulates the canonical Wnt signaling pathway in the lymphocytes by promoting the ubiquitin-mediated degradation of CTNNB1 and Wnt receptors FZD6 and LRP6. The sequence is that of Ubiquitin-associated domain-containing protein 2 (UBAC2) from Macaca fascicularis (Crab-eating macaque).